The sequence spans 151 residues: MSEIITSLQTELSNRHANMVSEAVLAFSEHHDSALHSYFLNARVKDVILESLRTTEEKLRALDKLQLDASKNLSNLLVEYNSINAELESVNSKISSISSQEYALEEFQALSQNFEKNLVQHRRNSQNKLKCAMEKLKMIETSTHKAILDNF.

Positions 56 to 140 form a coiled coil; it reads EEKLRALDKL…CAMEKLKMIE (85 aa).

Component of linear elements (LinEs), which are similar to synaptonemal complexes, at least composed of rec27, rec25, rec10 and mug20. Interacts with rec10.

It localises to the cytoplasm. The protein localises to the nucleus. Its subcellular location is the chromosome. Its function is as follows. During meiotic DNA recombination, binds to and may help activate DNA double-strand break (DSB) hotspot sites. This chain is Linear element protein Mug20, found in Schizosaccharomyces pombe (strain 972 / ATCC 24843) (Fission yeast).